Reading from the N-terminus, the 307-residue chain is 1-phosphofructokinase (307 aa).

ATP contacts are provided by residues 217 to 222 (SMGSDG) and 249 to 250 (GD). Residue Asp250 is the Proton acceptor of the active site.

The protein belongs to the carbohydrate kinase PfkB family.

The catalysed reaction is beta-D-fructose 1-phosphate + ATP = beta-D-fructose 1,6-bisphosphate + ADP + H(+). Functionally, catalyzes the ATP-dependent phosphorylation of fructose-l-phosphate to fructose-l,6-bisphosphate. This Borreliella burgdorferi (strain ATCC 35210 / DSM 4680 / CIP 102532 / B31) (Borrelia burgdorferi) protein is 1-phosphofructokinase (fruK).